Reading from the N-terminus, the 207-residue chain is Small ribosomal subunit protein uS4c (207 aa).

The segment at 20–52 (GFSKKIDRNHTPPGQHGWKKKASDQKKSKESQY) is disordered. The span at 40 to 52 (KASDQKKSKESQY) shows a compositional bias: basic and acidic residues. The S4 RNA-binding domain occupies 97–158 (MRLDNIIYRL…NSQQLIKNYL (62 aa)).

Belongs to the universal ribosomal protein uS4 family. As to quaternary structure, part of the 30S ribosomal subunit. Contacts protein S5. The interaction surface between S4 and S5 is involved in control of translational fidelity.

The protein localises to the plastid. Functionally, one of the primary rRNA binding proteins, it binds directly to 16S rRNA where it nucleates assembly of the body of the 30S subunit. In terms of biological role, with S5 and S12 plays an important role in translational accuracy. The sequence is that of Small ribosomal subunit protein uS4c (rps4) from Prototheca wickerhamii.